The primary structure comprises 882 residues: Protein PML (882 aa).

The segment at 1–48 (MEPAPARSPRPQQDPARPQEPTMPPPETPSEGRQPSPSPSPTERAPAS) is disordered. Ser-8 bears the Phosphoserine; by HIPK2 mark. Ser-36 and Ser-38 each carry phosphoserine; by HIPK2 and MAPK1. At Ser-48 the chain carries Phosphoserine. Residues Cys-57 and Cys-60 each coordinate Zn(2+). An RING-type zinc finger spans residues 57–92 (CQQCQAEAKCPKLLPCLHTLCSGCLEASGMQCPICQ). Residue Lys-65 forms a Glycyl lysine isopeptide (Lys-Gly) (interchain with G-Cter in SUMO1); alternate linkage. Lys-65 is covalently cross-linked (Glycyl lysine isopeptide (Lys-Gly) (interchain with G-Cter in SUMO2); alternate). Residues Cys-72, His-74, Cys-77, Cys-80, Cys-88, and Cys-91 each coordinate Zn(2+). Ser-117 is modified (phosphoserine; by CHEK2). The B box-type 1; atypical zinc-finger motif lies at 124–166 (DAQAVCTRCKESADFWCFECEQLLCAKCFEAHQWFLKHEARPL). Cys-129, Cys-132, Cys-151, and His-155 together coordinate Zn(2+). A Glycyl lysine isopeptide (Lys-Gly) (interchain with G-Cter in SUMO1); alternate cross-link involves residue Lys-160. A Glycyl lysine isopeptide (Lys-Gly) (interchain with G-Cter in SUMO2); alternate cross-link involves residue Lys-160. Lys-160 is covalently cross-linked (Glycyl lysine isopeptide (Lys-Gly) (interchain with G-Cter in SUMO1P1/SUMO5); alternate). The segment at 183–236 (KTNNIFCSNPNHRTPTLTSIYCRGCSKPLCCSCALLDSSHSELKCDISAEIQQR) adopts a B box-type 2 zinc-finger fold. Cys-189, His-194, Cys-215, and His-222 together coordinate Zn(2+). The stretch at 228-253 (DISAEIQQRQEELDAMTQALQEQDSA) forms a coiled coil. Lys-380 is covalently cross-linked (Glycyl lysine isopeptide (Lys-Gly) (interchain with G-Cter in SUMO2); alternate). Residue Lys-380 forms a Glycyl lysine isopeptide (Lys-Gly) (interchain with G-Cter in /SUMO5); alternate linkage. Lys-380 participates in a covalent cross-link: Glycyl lysine isopeptide (Lys-Gly) (interchain with G-Cter in ubiquitin); alternate. A Glycyl lysine isopeptide (Lys-Gly) (interchain with G-Cter in SUMO2) cross-link involves residue Lys-394. Lys-400 participates in a covalent cross-link: Glycyl lysine isopeptide (Lys-Gly) (interchain with G-Cter in SUMO1P1/SUMO5); alternate. Residues Lys-400 and Lys-401 each participate in a glycyl lysine isopeptide (Lys-Gly) (interchain with G-Cter in ubiquitin); alternate cross-link. Lys-401 participates in a covalent cross-link: Glycyl lysine isopeptide (Lys-Gly) (interchain with G-Cter in SUMO2); alternate. Phosphoserine; by MAPK1 and MAPK7 is present on Ser-403. The interaction with PER2 stretch occupies residues 448-555 (GAHPVPVYAF…ASGAGEAEER (108 aa)). Lys-460 is covalently cross-linked (Glycyl lysine isopeptide (Lys-Gly) (interchain with G-Cter in SUMO2)). A disordered region spans residues 467 to 589 (DVSNTTTAQK…SESSDLQLEG (123 aa)). Residues 468–484 (VSNTTTAQKRKCSQTQC) show a composition bias toward polar residues. Residue Lys-476 forms a Glycyl lysine isopeptide (Lys-Gly) (interchain with G-Cter in SUMO2); alternate linkage. Lys-476 participates in a covalent cross-link: Glycyl lysine isopeptide (Lys-Gly) (interchain with G-Cter in ubiquitin); alternate. A Nuclear localization signal motif is present at residues 476–490 (KRKCSQTQCPRKVIK). A Glycyl lysine isopeptide (Lys-Gly) (interchain with G-Cter in SUMO2) cross-link involves residue Lys-478. Glycyl lysine isopeptide (Lys-Gly) (interchain with G-Cter in SUMO2); alternate cross-links involve residues Lys-487 and Lys-490. Residue Lys-487 is modified to N6-acetyllysine; alternate. Over residues 489-501 (IKMESEEGKEARL) the composition is skewed to basic and acidic residues. Lys-490 participates in a covalent cross-link: Glycyl lysine isopeptide (Lys-Gly) (interchain with G-Cter in SUMO1); alternate. Lys-490 is covalently cross-linked (Glycyl lysine isopeptide (Lys-Gly) (interchain with G-Cter in SUMO1P1/SUMO5); alternate). Ser-493 is modified (phosphoserine). A Glycyl lysine isopeptide (Lys-Gly) (interchain with G-Cter in SUMO1); alternate cross-link involves residue Lys-497. Lys-497 participates in a covalent cross-link: Glycyl lysine isopeptide (Lys-Gly) (interchain with G-Cter in SUMO2); alternate. Lys-497 participates in a covalent cross-link: Glycyl lysine isopeptide (Lys-Gly) (interchain with G-Cter in SUMO1P1/SUMO5); alternate. At Ser-504 the chain carries Phosphoserine. Position 505 is a phosphoserine; by MAPK1 (Ser-505). Residues 505–516 (SPEQPRPSTSKA) show a composition bias toward polar residues. Ser-512 carries the post-translational modification Phosphoserine. Lys-515 is modified (N6-acetyllysine). A phosphoserine mark is found at Ser-518, Ser-527, and Ser-530. Ser-518 is modified (phosphoserine; by CDK1 and CDK2). 2 positions are modified to phosphoserine; by MAPK1: Ser-527 and Ser-530. Residues 556-562 (VVVISSS) are sumo interaction motif (SIM). Ser-565 is modified (phosphoserine). Phosphoserine; by CK2 is present on Ser-565. At Thr-867 the chain carries Phosphothreonine.

As to quaternary structure, key component of PML bodies. PML bodies are formed by the interaction of PML homodimers (via SUMO-binding motif) with sumoylated PML, leading to the assembly of higher oligomers. Several types of PML bodies have been observed. PML bodies can form hollow spheres that can sequester target proteins inside. Interacts (via SUMO-binding motif) with sumoylated proteins. Interacts (via C-terminus) with p53/TP53. Recruits p53/TP53 and CHEK2 into PML bodies, which promotes p53/TP53 phosphorylation at 'Ser-20' and prevents its proteasomal degradation. Interacts with MDM2, and sequesters MDM2 in the nucleolus, thereby preventing ubiquitination of p53/TP53. Interaction with PML-RARA oncoprotein and certain viral proteins causes disassembly of PML bodies and abolishes the normal PML function. Interacts with HIPK2, TERT, SIRT1, TOPBP1, TRIM27 and TRIM69. Interacts with ELF4 (via C-terminus). Interacts with ITPR3. Interacts (in the cytoplasm) with TGFBR1, TGFBR2 and PKM. Interacts (via the coiled-coil domain and when sumoylated) with SATB1. Interacts with UBE2I; the interaction is enhanced by arsenic binding. Interacts (PML-RARA oncoprotein, via the coiled-coil domain) with UBE2I; the interaction is enhanced by arsenic binding and is required for PML-RARA oncoprotein sumoylation and inhibition of RARA transactivational activity. Interacts with RB1, PPP1A, SMAD2, SMAD3, DAXX, RPL11 and MTOR. Interacts with PPARGC1A and KAT2A. Interacts with CSNK2A1 and CSNK2A3. Interacts with ANKRD2; the interaction is direct. Interacts (via SUMO-interacting motif) with sumoylated MORC3. Isoform PML-1, isoform PML-2, isoform PML-3, isoform PML-4, isoform PML-5 and isoform PML-6 interact with RNF4. Isoform PML-1 interacts with NLRP3. Isoform PML-1, isoform PML-2, isoform PML-3, isoform PML-4 and isoform PML-5 interact with MAGEA2, RBL2, PER2 and E2F4. Isoform PML-2 interacts with CIITA. Isoform PML-2, isoform PML-3 and isoform PML-4 interact with TBX2. Isoform PML-4 interacts with RANBP2, HDAC7, KAT6A, WRN, PIN1, TBX3 and phosphorylated MAPK1/ERK2. Isoform PML-4 interacts with the CTNNB1 and TCF7L2/TCF4 complex. Isoform PML-4 preferentially interacts with MAPK7/BMK1 although other isoforms (isoform PML-1, isoform PML-2, isoform PML-3 and isoform PML-6) also interact with it. Isoform PML-12 interacts with PIAS1, PIAS2 (isoform PIAS2-alpha) and CSNK2A1/CK2. Interacts with TRIM16. Interacts with PRDM1/Blimp-1. Interacts (via RING-type zinc finger) with EIF4E; the interaction results in conformational changes of both interacting proteins and reduces EIF4E affinity for the 5' m7G cap of mRNA, thus reducing EIF4E-mediated mRNA nuclear export. (Microbial infection) Interacts with Lassa virus Z protein and rabies virus phosphoprotein. In terms of assembly, (Microbial infection) Isoform PML-1 interacts with herpes simplex virus-1/HHV-1 ICP0. As to quaternary structure, (Microbial infection) Isoform PML-2 interacts with human adenovirus 2 E1A and this interaction stimulates E1A-dependent transcriptional activation. (Microbial infection) Isoform PML-4 interacts with VZV capsid protein VP26/ORF23 capsid protein. In terms of assembly, (Microbial infection) The sumoylated isoform PML-4 interacts with encephalomyocarditis virus (EMCV) RNA-directed RNA polymerase 3D-POL (P3D-POL). As to quaternary structure, (Microbial infection) Isoform PML-6 interacts with moloney murine leukemia virus (MoMLV) integrase (IN) and reverse transcriptase (RT). (Microbial infection) Isoform PML-4 and isoform PML-5 interact with human adenovirus 5 E1B-55K protein; these interactions promote efficient subnuclear targeting of E1B-55K to PML nuclear bodies. In terms of assembly, (Microbial infection) Isoform PML-3 interacts (via RING-type zinc finger) with human foamy virus bel1/tas and bet. As to quaternary structure, (Microbial infection) Interacts with human cytomegalovirus (HHV-5) immediate early protein IE1; this interaction mediates PML desumoylation and PML-mediated sumoylation of IE1. Post-translationally, ubiquitinated; mediated by RNF4, RNF111, UHRF1, UBE3A/E6AP, BCR(KLHL20) E3 ubiquitin ligase complex E3 ligase complex, SIAH1 or SIAH2 and leading to subsequent proteasomal degradation. Ubiquitination by BCR(KLHL20) E3 ubiquitin ligase complex E3 ligase complex requires CDK1/2-mediated phosphorylation at Ser-518 which in turn is recognized by prolyl-isopeptidase PIN1 and PIN1-catalyzed isomerization further potentiates PML interaction with KLHL20. 'Lys-6'-, 'Lys-11'-, 'Lys-48'- and 'Lys-63'-linked polyubiquitination by RNF4 is polysumoylation-dependent. Ubiquitination by RNF111 is polysumoylation-dependent. In terms of processing, sumoylation regulates PML's: stability in response to extracellular or intracellular stimuli, transcription directly and indirectly, through sequestration of or dissociation of the transcription factors from PML-NBs, ability to regulate apoptosis and its anti-viral activities. It is also essential for: maintaining proper PML nuclear bodies (PML-NBs) structure and normal function, recruitment of components of PML-NBs, the turnover and retention of PML in PML-NBs and the integrity of PML-NBs. Undergoes 'Lys-11'-linked sumoylation. Sumoylation on all three sites (Lys-65, Lys-160 and Lys-490) is required for nuclear body formation. Sumoylation on Lys-160 is a prerequisite for sumoylation on Lys-65. Lys-65 and Lys-160 are sumoylated by PISA1 and PIAS2. PIAS1-mediated sumoylation of PML promotes its interaction with CSNK2A1/CK2 and phosphorylation at Ser-565 which in turn triggers its ubiquitin-mediated degradation. PIAS1-mediated sumoylation of PML-RARA promotes its ubiquitin-mediated degradation. The PML-RARA fusion protein requires the coiled-coil domain for sumoylation. Sumoylation at Lys-490 by RANBP2 is essential for the proper assembly of PML-NBs. SUMO1P1/SUMO5 conjugated PML at Lys-160, Lys-380, Lys-400, Lys-490 and Lys-497, but Lys-380, Lys-400 and Lys-497 are not key acceptor lysines. SUMO1P1/SUMO5 forms polymeric chain on Lys-160 of PML by successive conjugation at 'Lys-18'; facilitating recruitment of PML-NB components, which enlarges PML. SUMO1P1/SUMO5 conjugation of PML increases SUMO2/3 conjugation, which leads to the recruitment of RNF4 and ubiquitin-dependent disintegration of PML-NBs. SUMO1P1/SUMO5 monoconjugated Lys-490. DNA damage triggers its sumoylation while some but not all viral infections can abolish sumoylation. Desumoylated by SENP1, SENP2, SENP3, SENP5 and SENP6. Arsenic induces PML and PML-RARA polysumoylation and their subsequent RNF4-dependent ubiquitination and proteasomal degradation, and is used as treatment in acute promyelocytic leukemia (APL). The nuclear isoforms (isoform PML-1, isoform PML-2, isoform PML-3, isoform PML-4, isoform PML-5 and isoform PML-6) show an increased sumoylation in response to arsenic trioxide. The cytoplasmic isoform PML-7 is not sumoylated. Phosphorylation is a major regulatory mechanism that controls PML protein abundance and the number and size of PML nuclear bodies (PML-NBs). Phosphorylated in response to DNA damage, probably by ATR. HIPK2-mediated phosphorylation at Ser-8, Ser-36 and Ser-38 leads to increased accumulation of PML protein and its sumoylation and is required for the maximal pro-apoptotic activity of PML after DNA damage. CHEK2-mediated phosphorylation at Ser-117 is important for PML-mediated apoptosis following DNA damage. MAPK1-mediated phosphorylations at Ser-403, Ser-505, Ser-527 and Ser-530 and CDK1/2-mediated phosphorylation at Ser-518 promote PIN1-dependent PML degradation. CK2-mediated phosphorylation at Ser-565 primes PML ubiquitination via an unidentified ubiquitin ligase. Post-translationally, (Microbial infection) Upon infection with Epstein-Barr virus, phosphorylated by CK2. Viral EBNA1 increases the association of CK2 with PML proteins, which increases PML phosphorylation by CK2, triggering the USP7-dependent polyubiquitylation and degradation of PML. In terms of processing, acetylation at Lys-487 is essential for its nuclear localization. Deacetylated at Lys-487 by SIRT1 and this deacetylation promotes PML control of PER2 nuclear localization. (Microbial infection) Immediate early protein IE1 of human cytomegalovirus (HHV-5) interferes with the sumoylation of PML. Immediate early protein IE1 inhibits PML de novo sumoylation. Post-translationally, (Microbial infection) Cleaved at two different sites by enterovirus 71 protease 3C, leading to impaired PML-Nuclear bodies formation.

It localises to the nucleus. It is found in the nucleoplasm. Its subcellular location is the cytoplasm. The protein localises to the PML body. The protein resides in the nucleolus. It localises to the endoplasmic reticulum membrane. It is found in the early endosome membrane. It functions in the pathway protein modification; protein sumoylation. Its function is as follows. Functions via its association with PML-nuclear bodies (PML-NBs) in a wide range of important cellular processes, including tumor suppression, transcriptional regulation, apoptosis, senescence, DNA damage response, and viral defense mechanisms. Acts as the scaffold of PML-NBs allowing other proteins to shuttle in and out, a process which is regulated by SUMO-mediated modifications and interactions. Inhibits EIF4E-mediated mRNA nuclear export by reducing EIF4E affinity for the 5' 7-methylguanosine (m7G) cap of target mRNAs. Isoform PML-4 has a multifaceted role in the regulation of apoptosis and growth suppression: activates RB1 and inhibits AKT1 via interactions with PP1 and PP2A phosphatases respectively, negatively affects the PI3K pathway by inhibiting MTOR and activating PTEN, and positively regulates p53/TP53 by acting at different levels (by promoting its acetylation and phosphorylation and by inhibiting its MDM2-dependent degradation). Isoform PML-4 also: acts as a transcriptional repressor of TBX2 during cellular senescence and the repression is dependent on a functional RBL2/E2F4 repressor complex, regulates double-strand break repair in gamma-irradiation-induced DNA damage responses via its interaction with WRN, acts as a negative regulator of telomerase by interacting with TERT, and regulates PER2 nuclear localization and circadian function. Isoform PML-6 inhibits specifically the activity of the tetrameric form of PKM. The nuclear isoforms (isoform PML-1, isoform PML-2, isoform PML-3, isoform PML-4 and isoform PML-5) in concert with SATB1 are involved in local chromatin-loop remodeling and gene expression regulation at the MHC-I locus. Isoform PML-2 is required for efficient IFN-gamma induced MHC II gene transcription via regulation of CIITA. Cytoplasmic PML is involved in the regulation of the TGF-beta signaling pathway. PML also regulates transcription activity of ELF4 and can act as an important mediator for TNF-alpha- and IFN-alpha-mediated inhibition of endothelial cell network formation and migration. Exhibits antiviral activity against both DNA and RNA viruses. The antiviral activity can involve one or several isoform(s) and can be enhanced by the permanent PML-NB-associated protein DAXX or by the recruitment of p53/TP53 within these structures. Isoform PML-4 restricts varicella zoster virus (VZV) via sequestration of virion capsids in PML-NBs thereby preventing their nuclear egress and inhibiting formation of infectious virus particles. The sumoylated isoform PML-4 restricts rabies virus by inhibiting viral mRNA and protein synthesis. The cytoplasmic isoform PML-14 can restrict herpes simplex virus-1 (HHV-1) replication by sequestering the viral E3 ubiquitin-protein ligase ICP0 in the cytoplasm. Isoform PML-6 shows restriction activity towards human cytomegalovirus (HHV-5) and influenza A virus strains PR8(H1N1) and ST364(H3N2). Sumoylated isoform PML-4 and isoform PML-12 show antiviral activity against encephalomyocarditis virus (EMCV) by promoting nuclear sequestration of viral polymerase (P3D-POL) within PML NBs. Isoform PML-3 exhibits antiviral activity against poliovirus by inducing apoptosis in infected cells through the recruitment and the activation of p53/TP53 in the PML-NBs. Isoform PML-3 represses human foamy virus (HFV) transcription by complexing the HFV transactivator, bel1/tas, preventing its binding to viral DNA. PML may positively regulate infectious hepatitis C viral (HCV) production and isoform PML-2 may enhance adenovirus transcription. Functions as an E3 SUMO-protein ligase that sumoylates (HHV-5) immediate early protein IE1, thereby participating in the antiviral response. Isoforms PML-3 and PML-6 display the highest levels of sumoylation activity. The polypeptide is Protein PML (PML) (Homo sapiens (Human)).